The chain runs to 224 residues: Ribonuclease HII (224 aa).

The RNase H type-2 domain occupies Met1 to Lys219. Asp7, Glu8, and Asp105 together coordinate a divalent metal cation.

This sequence belongs to the RNase HII family. Mn(2+) is required as a cofactor. It depends on Mg(2+) as a cofactor.

The protein resides in the cytoplasm. The enzyme catalyses Endonucleolytic cleavage to 5'-phosphomonoester.. In terms of biological role, endonuclease that specifically degrades the RNA of RNA-DNA hybrids. The protein is Ribonuclease HII of Methanosarcina barkeri (strain Fusaro / DSM 804).